The primary structure comprises 156 residues: Small ribosomal subunit protein uS7 (156 aa).

It belongs to the universal ribosomal protein uS7 family. As to quaternary structure, part of the 30S ribosomal subunit. Contacts proteins S9 and S11.

Its function is as follows. One of the primary rRNA binding proteins, it binds directly to 16S rRNA where it nucleates assembly of the head domain of the 30S subunit. Is located at the subunit interface close to the decoding center, probably blocks exit of the E-site tRNA. The polypeptide is Small ribosomal subunit protein uS7 (Deinococcus radiodurans (strain ATCC 13939 / DSM 20539 / JCM 16871 / CCUG 27074 / LMG 4051 / NBRC 15346 / NCIMB 9279 / VKM B-1422 / R1)).